Reading from the N-terminus, the 259-residue chain is Gasdermin bGSDM (259 aa).

A lipid anchor (S-palmitoyl cysteine) is attached at Cys3. Transmembrane regions (beta stranded) follow at residues 70-86 (FQFR…AASV), 98-116 (SGSF…IQLS), 162-179 (GIRI…DLSA), and 187-203 (AKAK…SYAF). The tract at residues 244–259 (PFAFIGDDAFVDLPES) is C-terminal region.

The protein belongs to the bacterial gasdermin family. Monomer in solution. As to quaternary structure, forms large, homooligomeric ring-shaped pores when inserted in membranes. Post-translationally, palmitoylation helps stabilize the inactive state; may self palmitoylate. Palmitoylation plays a significant role in pore formation.

The protein resides in the cytoplasm. Its subcellular location is the cell inner membrane. The full-length protein before cleavage is inactive: intramolecular interactions between the N-terminal domain and the C-terminal region as well as the lipid modification, mediate autoinhibition. The pyroptosis-like-inducing activity is carried by the released N-terminal domain (Gasdermin bGSDM, N-terminus). Functionally, precursor of a pore-forming protein involved in defense against bacteriophages. Expression of bGSDM and the neighboring protease gene (Ga0098714_109514) is toxic in E.coli on solid medium. Cleavage of this precursor by its dedicated protease releases the active moiety (gasdermin bGSDM, N-terminus) which inserts into membranes, forming pores and triggering cell death. In terms of biological role, pore-forming protein that causes membrane permeabilization via a pyroptosis-like activity. Makes ring-like pores when released. In Bradyrhizobium tropiciagri, this protein is Gasdermin bGSDM.